Consider the following 367-residue polypeptide: Nuclear hormone receptor-like 1 (367 aa).

A DNA-binding region (nuclear receptor) is located at residues G32–N107. 2 NR C4-type zinc fingers span residues C35–C55 and C71–C95. Residues E145–T367 enclose the NR LBD domain.

Belongs to the nuclear hormone receptor family.

The protein resides in the nucleus. This Onchocerca volvulus protein is Nuclear hormone receptor-like 1 (nhr-1).